Here is a 261-residue protein sequence, read N- to C-terminus: Small ribosomal subunit protein uS2 (261 aa).

This sequence belongs to the universal ribosomal protein uS2 family.

This chain is Small ribosomal subunit protein uS2, found in Streptococcus mutans serotype c (strain ATCC 700610 / UA159).